The sequence spans 173 residues: Monothiol glutaredoxin-S14, chloroplastic (173 aa).

The transit peptide at 1 to 63 (MALRSVKTPT…KLKPTKFRCS (63 aa)) directs the protein to the chloroplast. Positions 72–173 (KDTLEKLVNS…QEEVEKAMCS (102 aa)) constitute a Glutaredoxin domain. Lys-89 is a binding site for glutathione. [2Fe-2S] cluster is bound by residues Cys-97 and Phe-99. Cys-97 bears the S-glutathionyl cysteine mark. A required for CAX1 activation region spans residues 97 to 100 (CGFS). The glutathione site is built by Arg-126 and Lys-130. A required for CAX1 activation region spans residues 133-137 (SNWPT). Residues Phe-138 and 151 to 152 (CD) contribute to the glutathione site.

It belongs to the glutaredoxin family. CGFS subfamily. As to quaternary structure, [2Fe-2S]-bridged holo-homodimer. Interacts with N-terminal part of CAX1 in yeast. Interacts in vitro with SUFE1, BOLA1, BOLA2 and BOLA4. Interacts in vivo only with SUFE1, BOLA1 and BOLA4. Interacts with SBP1. As to expression, highly expressed in leaves, at intermediate levels in stems and at lower levels in roots and flowers.

Its subcellular location is the plastid. The protein localises to the chloroplast. Functionally, may only reduce GSH-thiol disulfides, but not protein disulfides (Potential). Probably involved in the regulation of the redox state of the BOLA proteins (Potential). May act as Fe-S cluster donors to Fe-S cluster-requiring proteins. May protect cells against protein oxidative damage. May regulate CAX cation transporters. The GRXS14-BOLA1 heterodimer binds a labile, oxygen sensitive Fe-S cluster. The sequence is that of Monothiol glutaredoxin-S14, chloroplastic from Arabidopsis thaliana (Mouse-ear cress).